Consider the following 157-residue polypeptide: 2-C-methyl-D-erythritol 2,4-cyclodiphosphate synthase (157 aa).

Positions 8 and 10 each coordinate a divalent metal cation. Residues 8–10 (DVH) and 34–35 (HS) each bind 4-CDP-2-C-methyl-D-erythritol 2-phosphate. Histidine 42 lines the a divalent metal cation pocket. Residues 56–58 (DIG), 61–65 (FPDTD), 132–135 (TTEE), and phenylalanine 139 contribute to the 4-CDP-2-C-methyl-D-erythritol 2-phosphate site.

It belongs to the IspF family. In terms of assembly, homotrimer. The cofactor is a divalent metal cation.

The catalysed reaction is 4-CDP-2-C-methyl-D-erythritol 2-phosphate = 2-C-methyl-D-erythritol 2,4-cyclic diphosphate + CMP. The protein operates within isoprenoid biosynthesis; isopentenyl diphosphate biosynthesis via DXP pathway; isopentenyl diphosphate from 1-deoxy-D-xylulose 5-phosphate: step 4/6. Functionally, involved in the biosynthesis of isopentenyl diphosphate (IPP) and dimethylallyl diphosphate (DMAPP), two major building blocks of isoprenoid compounds. Catalyzes the conversion of 4-diphosphocytidyl-2-C-methyl-D-erythritol 2-phosphate (CDP-ME2P) to 2-C-methyl-D-erythritol 2,4-cyclodiphosphate (ME-CPP) with a corresponding release of cytidine 5-monophosphate (CMP). The polypeptide is 2-C-methyl-D-erythritol 2,4-cyclodiphosphate synthase (Clostridium botulinum (strain Eklund 17B / Type B)).